The following is a 174-amino-acid chain: Protein CURVATURE THYLAKOID 1B, chloroplastic (174 aa).

A disordered region spans residues Met1 to Ser20. The transit peptide at Met1 to Arg63 directs the protein to the chloroplast. Ala64 bears the N-acetylalanine mark. Residues Ala64–Lys100 are Stromal-facing. The helical transmembrane segment at Tyr101–Ile121 threads the bilayer. At Ser122–Arg126 the chain is on the lumenal side. The chain crosses the membrane as a helical span at residues Leu127–Tyr147. Residues Lys148–Ser174 lie on the Stromal side of the membrane.

It belongs to the CURT family. Homo- and heterodimers and trimers. Interacts with PSAL. Post-translationally, phosphorylated on either Thr-65 or Thr-66 by a threonine specific thylakoid kinase.

Its subcellular location is the plastid. The protein localises to the chloroplast thylakoid membrane. In terms of biological role, determines thylakoid architecture by inducing membrane curvature. In Arabidopsis thaliana (Mouse-ear cress), this protein is Protein CURVATURE THYLAKOID 1B, chloroplastic (CURT1B).